The primary structure comprises 614 residues: MDSDFGIPRELSPLQQLRSQYKPELPPCLQGTTVRVELGDGTTVAEAADSHTMARAFPHTLGQPLAHFLRETAQVPDAHIITELPSVRVGIVFCGRQAPGGHNVIWGLFEALKVHNAKSTLLGFLGGSEGLFAQKTLEITDDILQTYKNQGGYDLLGRTKDQIKTTEQVNAALKACTDLKLDGLVIIGGVISNTDAAHLAEFFAAAKCSTKVVGVPVTTNGDLKNQFVEANVGFDTICKVNSQLISNACTDALSAEKYYYFIRLMGRKHSHVALECTLQSHPNMVILGEEVAASKLTIFDIAKQICDAVQARAVEDKNHGVILIPEGLIVSIPEVYALLKEIHGLLRQGVSADKISTQLSPWSSALFEFLPPFIKKQLLLHPESDDSAQLSQIETEKLLAYLVETEMNKRLKEGTYKGKKFNAICHFFGYQARGSLPSKFDCDYAYVLGHICYHILAAGLNGYMATVTNLKSPVNKWKCGATPITAMMTVKHWSQDASYTLTSIGRPAIHPAMVDLKGKAYDLLRQNAQKFLMEDLYRNPGPLQYDGPGADAKAVSLCVEDQDYMGRIKKLQEYLDQVRTIVKPGCSQDVLKAALSVMASVTDVLTTISSNGGQ.

It belongs to the phosphofructokinase type A (PFKA) family. PPi-dependent PFK group II subfamily. Clade 'Long' sub-subfamily. As to quaternary structure, tetramer of two alpha (regulatory) and two beta (catalytic) chains. In terms of tissue distribution, expressed in leaves, roots, and flowers (e.g. sepals, petals, stamen and gynoecium).

Its subcellular location is the cytoplasm. Its pathway is carbohydrate degradation; glycolysis; D-glyceraldehyde 3-phosphate and glycerone phosphate from D-glucose: step 3/4. Its activity is regulated as follows. Allosterically activated by fructose 2,6-bisphosphate. Functionally, regulatory subunit of pyrophosphate--fructose 6-phosphate 1-phosphotransferase. The chain is Pyrophosphate--fructose 6-phosphate 1-phosphotransferase subunit alpha 1 from Arabidopsis thaliana (Mouse-ear cress).